A 524-amino-acid polypeptide reads, in one-letter code: Putative cysteine ligase BshC (524 aa).

A coiled-coil region spans residues 437-457 (AQALDRSARKINYQIEKMERK).

It belongs to the BshC family.

The sequence is that of Putative cysteine ligase BshC from Solibacter usitatus (strain Ellin6076).